Here is a 154-residue protein sequence, read N- to C-terminus: SsrA-binding protein (154 aa).

The disordered stretch occupies residues 134–154 (DKREDIKKRDQERELSRRFKN).

This sequence belongs to the SmpB family.

The protein localises to the cytoplasm. Its function is as follows. Required for rescue of stalled ribosomes mediated by trans-translation. Binds to transfer-messenger RNA (tmRNA), required for stable association of tmRNA with ribosomes. tmRNA and SmpB together mimic tRNA shape, replacing the anticodon stem-loop with SmpB. tmRNA is encoded by the ssrA gene; the 2 termini fold to resemble tRNA(Ala) and it encodes a 'tag peptide', a short internal open reading frame. During trans-translation Ala-aminoacylated tmRNA acts like a tRNA, entering the A-site of stalled ribosomes, displacing the stalled mRNA. The ribosome then switches to translate the ORF on the tmRNA; the nascent peptide is terminated with the 'tag peptide' encoded by the tmRNA and targeted for degradation. The ribosome is freed to recommence translation, which seems to be the essential function of trans-translation. This is SsrA-binding protein from Leuconostoc mesenteroides subsp. mesenteroides (strain ATCC 8293 / DSM 20343 / BCRC 11652 / CCM 1803 / JCM 6124 / NCDO 523 / NBRC 100496 / NCIMB 8023 / NCTC 12954 / NRRL B-1118 / 37Y).